The primary structure comprises 528 residues: Probable feruloyl esterase B-1 (528 aa).

The first 19 residues, 1-19, serve as a signal peptide directing secretion; it reads MMWWFLLIGLASAAATASS. Cystine bridges form between cysteine 29–cysteine 78, cysteine 64–cysteine 117, cysteine 190–cysteine 445, cysteine 259–cysteine 276, cysteine 285–cysteine 295, and cysteine 505–cysteine 527. N-linked (GlcNAc...) asparagine glycans are attached at residues asparagine 83 and asparagine 101. Residue serine 191 is the Acyl-ester intermediate of the active site. 5 residues coordinate Ca(2+): aspartate 260, aspartate 263, alanine 265, aspartate 267, and isoleucine 269. Residues asparagine 286, asparagine 354, and asparagine 385 are each glycosylated (N-linked (GlcNAc...) asparagine). Residues aspartate 404 and histidine 444 each act as charge relay system in the active site.

The protein belongs to the tannase family.

Its subcellular location is the secreted. The catalysed reaction is feruloyl-polysaccharide + H2O = ferulate + polysaccharide.. Functionally, involved in degradation of plant cell walls. Hydrolyzes the feruloyl-arabinose ester bond in arabinoxylans as well as the feruloyl-galactose and feruloyl-arabinose ester bonds in pectin. This is Probable feruloyl esterase B-1 (faeB-1) from Aspergillus fumigatus (strain ATCC MYA-4609 / CBS 101355 / FGSC A1100 / Af293) (Neosartorya fumigata).